The primary structure comprises 238 residues: MTEAAELPPAPEQAREVFGDRFADAVRYAELLAEAGVQRGLIGPREVPRLWERHLLNCAVLSEVVPEGVTVCDVGSGAGLPGIPLALVREDLKITLLEPLLRRTNFLTEVVELLGLDHVTVIRGRAEEVMGKIPPVHVVTARAVAPLDRLATWGIPLLRPYGEMLALKGDTAEEELKSAATALSKLGAVETSVLHVGEGVVDPLSTVVRVEVGESPGGVRFAAKRAKAARTGRTRRRR.

Residues Gly-75, Leu-80, Ala-126–Glu-127, and Arg-142 contribute to the S-adenosyl-L-methionine site.

It belongs to the methyltransferase superfamily. RNA methyltransferase RsmG family.

The protein localises to the cytoplasm. In terms of biological role, specifically methylates the N7 position of guanine in position 518 of 16S rRNA. The polypeptide is Ribosomal RNA small subunit methyltransferase G (Streptomyces avermitilis (strain ATCC 31267 / DSM 46492 / JCM 5070 / NBRC 14893 / NCIMB 12804 / NRRL 8165 / MA-4680)).